We begin with the raw amino-acid sequence, 460 residues long: CCA-adding enzyme (460 aa).

2 residues coordinate ATP: S50 and R53. CTP-binding residues include S50 and R53. Residues D62, D64, and D117 each coordinate Mg(2+). Positions 140, 159, and 168 each coordinate ATP. CTP contacts are provided by H140, K159, and Y168.

The protein belongs to the tRNA nucleotidyltransferase/poly(A) polymerase family. Archaeal CCA-adding enzyme subfamily. In terms of assembly, homodimer. It depends on Mg(2+) as a cofactor.

It carries out the reaction a tRNA precursor + 2 CTP + ATP = a tRNA with a 3' CCA end + 3 diphosphate. It catalyses the reaction a tRNA with a 3' CCA end + 2 CTP + ATP = a tRNA with a 3' CCACCA end + 3 diphosphate. In terms of biological role, catalyzes the addition and repair of the essential 3'-terminal CCA sequence in tRNAs without using a nucleic acid template. Adds these three nucleotides in the order of C, C, and A to the tRNA nucleotide-73, using CTP and ATP as substrates and producing inorganic pyrophosphate. tRNA 3'-terminal CCA addition is required both for tRNA processing and repair. Also involved in tRNA surveillance by mediating tandem CCA addition to generate a CCACCA at the 3' terminus of unstable tRNAs. While stable tRNAs receive only 3'-terminal CCA, unstable tRNAs are marked with CCACCA and rapidly degraded. The polypeptide is CCA-adding enzyme (Methanoregula boonei (strain DSM 21154 / JCM 14090 / 6A8)).